The chain runs to 151 residues: NADPH-dependent 7-cyano-7-deazaguanine reductase (151 aa).

The active-site Thioimide intermediate is the Cys-51. Residue Asp-58 is the Proton donor of the active site. Substrate-binding positions include 73-75 (VES) and 92-93 (HE).

It belongs to the GTP cyclohydrolase I family. QueF type 1 subfamily.

It localises to the cytoplasm. It carries out the reaction 7-aminomethyl-7-carbaguanine + 2 NADP(+) = 7-cyano-7-deazaguanine + 2 NADPH + 3 H(+). Its pathway is tRNA modification; tRNA-queuosine biosynthesis. Functionally, catalyzes the NADPH-dependent reduction of 7-cyano-7-deazaguanine (preQ0) to 7-aminomethyl-7-deazaguanine (preQ1). The protein is NADPH-dependent 7-cyano-7-deazaguanine reductase of Bacteroides thetaiotaomicron (strain ATCC 29148 / DSM 2079 / JCM 5827 / CCUG 10774 / NCTC 10582 / VPI-5482 / E50).